The primary structure comprises 46 residues: Delta-actitoxin-Avd1d (46 aa).

Disulfide bonds link Cys-4/Cys-44, Cys-6/Cys-34, and Cys-27/Cys-45.

The protein belongs to the sea anemone sodium channel inhibitory toxin family. Type I subfamily.

The protein localises to the secreted. It is found in the nematocyst. Functionally, binds specifically to voltage-gated sodium channels (Nav), thereby delaying their inactivation during signal transduction. Thus it strongly stimulates mammalian cardiac muscle contraction. The sequence is that of Delta-actitoxin-Avd1d from Anemonia sulcata (Mediterranean snakelocks sea anemone).